The primary structure comprises 227 residues: tRNA (guanine-N(1)-)-methyltransferase (227 aa).

Residues Gly-111 and 135-140 (LGDYVL) contribute to the S-adenosyl-L-methionine site.

This sequence belongs to the RNA methyltransferase TrmD family. In terms of assembly, homodimer.

It localises to the cytoplasm. It catalyses the reaction guanosine(37) in tRNA + S-adenosyl-L-methionine = N(1)-methylguanosine(37) in tRNA + S-adenosyl-L-homocysteine + H(+). Its function is as follows. Specifically methylates guanosine-37 in various tRNAs. The polypeptide is tRNA (guanine-N(1)-)-methyltransferase (Leifsonia xyli subsp. xyli (strain CTCB07)).